The chain runs to 78 residues: Small ribosomal subunit protein bS18 (78 aa).

This sequence belongs to the bacterial ribosomal protein bS18 family. As to quaternary structure, part of the 30S ribosomal subunit. Forms a tight heterodimer with protein bS6.

Functionally, binds as a heterodimer with protein bS6 to the central domain of the 16S rRNA, where it helps stabilize the platform of the 30S subunit. The protein is Small ribosomal subunit protein bS18 of Kineococcus radiotolerans (strain ATCC BAA-149 / DSM 14245 / SRS30216).